Here is a 297-residue protein sequence, read N- to C-terminus: Nucleotide-binding protein BTH_I0482 (297 aa).

8 to 15 contacts ATP; the sequence is GISGSGKS. Residue 57-60 participates in GTP binding; sequence DARS.

This sequence belongs to the RapZ-like family.

Functionally, displays ATPase and GTPase activities. The polypeptide is Nucleotide-binding protein BTH_I0482 (Burkholderia thailandensis (strain ATCC 700388 / DSM 13276 / CCUG 48851 / CIP 106301 / E264)).